The primary structure comprises 206 residues: Proteasome subunit beta 2 (206 aa).

A propeptide spans 1–7 (MREAVSK) (removed in mature form; by autocatalysis). The active-site Nucleophile is the Thr8.

Belongs to the peptidase T1B family. In terms of assembly, the 20S proteasome core is composed of 14 alpha and 14 beta subunits that assemble into four stacked heptameric rings, resulting in a barrel-shaped structure. The two inner rings, each composed of seven catalytic beta subunits, are sandwiched by two outer rings, each composed of seven alpha subunits. The catalytic chamber with the active sites is on the inside of the barrel. Has a gated structure, the ends of the cylinder being occluded by the N-termini of the alpha-subunits. Is capped at one or both ends by the proteasome regulatory ATPase, PAN.

The protein resides in the cytoplasm. The catalysed reaction is Cleavage of peptide bonds with very broad specificity.. Its activity is regulated as follows. The formation of the proteasomal ATPase PAN-20S proteasome complex, via the docking of the C-termini of PAN into the intersubunit pockets in the alpha-rings, triggers opening of the gate for substrate entry. Interconversion between the open-gate and close-gate conformations leads to a dynamic regulation of the 20S proteasome proteolysis activity. Component of the proteasome core, a large protease complex with broad specificity involved in protein degradation. The polypeptide is Proteasome subunit beta 2 (Desulfurococcus amylolyticus (strain DSM 18924 / JCM 16383 / VKM B-2413 / 1221n) (Desulfurococcus kamchatkensis)).